The following is a 469-amino-acid chain: Protein apterous (469 aa).

Disordered stretches follow at residues 21–44 and 111–141; these read GPGAREKSPTPPVAHQGSNQCGSA and EVSDETTSGISFKTEPFGPPSSPESTSDSKI. 2 consecutive LIM zinc-binding domains span residues 148 to 200 and 210 to 263; these read CSGC…CKND and CSRC…CRTH. Positions 367 to 426 form a DNA-binding region, homeobox; the sequence is TKRMRTSFKHHQLRTMKSYFAINHNPDAKDLKQLSQKTGLPKRVLQVWFQNARAKWRRMM.

As to expression, expressed in PNS and CNS.

It localises to the nucleus. Its function is as follows. Required for the normal development of the wing and halter imaginal disks. The chain is Protein apterous (ap) from Drosophila melanogaster (Fruit fly).